A 244-amino-acid chain; its full sequence is Probable septum site-determining protein MinC (244 aa).

This sequence belongs to the MinC family. In terms of assembly, interacts with MinD and FtsZ.

Its function is as follows. Cell division inhibitor that blocks the formation of polar Z ring septums. Rapidly oscillates between the poles of the cell to destabilize FtsZ filaments that have formed before they mature into polar Z rings. Prevents FtsZ polymerization. The chain is Probable septum site-determining protein MinC from Dichelobacter nodosus (strain VCS1703A).